A 231-amino-acid polypeptide reads, in one-letter code: Claudin-10 (231 aa).

Residues Met1–Val21 traverse the membrane as a helical segment. Residues Ser22 to Arg80 lie on the Extracellular side of the membrane. Residues Gly81–Met101 traverse the membrane as a helical segment. Over Lys102–Lys115 the chain is Cytoplasmic. A helical transmembrane segment spans residues Ile116–Ser136. Residues Leu137 to Ala160 lie on the Extracellular side of the membrane. Residues Ala161–Phe181 form a helical membrane-spanning segment. The Cytoplasmic portion of the chain corresponds to Ser182 to Val231.

Belongs to the claudin family. Can form homodimers both in trans (interaction between CLDN10 molecules in opposing membranes) and in cis (interaction between CLDN10 molecules within one membrane). Interacts with CLDN19. Widely expressed, with highest expression detected in brain cortex, kidney and lung. In kidney, the expression is highest in medulla, with transcripts being detected in medullary thick ascending limb of Henle's loop (mTAL) and outer and inner medullary collecting ducts. Expressed in salivary glands and skin. In terms of tissue distribution, detected in kidney with transcripts being detected in PCT, mTAL and cortical collecting duct. Detected in uterus. Expressed in proximal tubules (at protein level). As to expression, only detected in kidney and uterus. Detected in kidney with transcripts being detected in PCT, mTAL and cortical collecting duct. Detected in uterus. In terms of tissue distribution, expressed in the inner ear where it is detected in organ of Corti, marginal cells of stria vascularis, Reissner's membrane and spiral limbus (at protein level).

It localises to the cell junction. Its subcellular location is the tight junction. The protein localises to the cell membrane. It is found in the endoplasmic reticulum. The catalysed reaction is Na(+)(in) = Na(+)(out). It catalyses the reaction Li(+)(in) = Li(+)(out). It carries out the reaction K(+)(in) = K(+)(out). The enzyme catalyses Rb(+)(in) = Rb(+)(out). The catalysed reaction is Cs(+)(in) = Cs(+)(out). It catalyses the reaction NH4(+)(in) = NH4(+)(out). It carries out the reaction methylamine(out) = methylamine(in). The enzyme catalyses Mg(2+)(in) = Mg(2+)(out). The catalysed reaction is Ca(2+)(in) = Ca(2+)(out). It catalyses the reaction Sr(2+)(in) = Sr(2+)(out). It carries out the reaction chloride(in) = chloride(out). The enzyme catalyses nitrate(in) = nitrate(out). Forms paracellular channels: polymerizes in tight junction strands with cation- and anion-selective channels through the strands, conveying epithelial permeability in a process known as paracellular tight junction permeability. Its function is as follows. Forms cation-selective paracellular channels. In sweat glands and in the thick ascending limb (TAL) of Henle's loop in kidney, it controls paracellular sodium permeability which is essential for proper sweat production and renal function. In terms of biological role, forms anion-selective paracellular channels. In renal proximal tubules, it conveys selective chloride over hydrogencarbonate anion permeability which is required for renal chloride reabsorption and salt homeostasis. The protein is Claudin-10 of Mus musculus (Mouse).